The chain runs to 161 residues: 18.3 kDa class I heat shock protein (161 aa).

A sHSP domain is found at 48–161 (ETAAFANARI…KPQVKAINVY (114 aa)).

This sequence belongs to the small heat shock protein (HSP20) family. As to quaternary structure, forms oligomeric structures.

It is found in the cytoplasm. This Oxybasis rubra (Red goosefoot) protein is 18.3 kDa class I heat shock protein (HSP18).